The following is a 230-amino-acid chain: Large ribosomal subunit protein uL1 (230 aa).

This sequence belongs to the universal ribosomal protein uL1 family. In terms of assembly, part of the 50S ribosomal subunit.

Its function is as follows. Binds directly to 23S rRNA. The L1 stalk is quite mobile in the ribosome, and is involved in E site tRNA release. In terms of biological role, protein L1 is also a translational repressor protein, it controls the translation of the L11 operon by binding to its mRNA. This is Large ribosomal subunit protein uL1 from Acidiphilium cryptum (strain JF-5).